A 418-amino-acid polypeptide reads, in one-letter code: Queuine tRNA-ribosyltransferase accessory subunit 2 (418 aa).

Zn(2+) contacts are provided by C325, C327, C330, and H356.

This sequence belongs to the queuine tRNA-ribosyltransferase family. QTRT2 subfamily. In terms of assembly, heterodimer of a catalytic subunit and an accessory subunit. The cofactor is Zn(2+).

It localises to the cytoplasm. Functionally, non-catalytic subunit of the queuine tRNA-ribosyltransferase (TGT) that catalyzes the base-exchange of a guanine (G) residue with queuine (Q) at position 34 (anticodon wobble position) in tRNAs with GU(N) anticodons (tRNA-Asp, -Asn, -His and -Tyr), resulting in the hypermodified nucleoside queuosine (7-(((4,5-cis-dihydroxy-2-cyclopenten-1-yl)amino)methyl)-7-deazaguanosine). This Drosophila yakuba (Fruit fly) protein is Queuine tRNA-ribosyltransferase accessory subunit 2.